The chain runs to 310 residues: p-hydroxybenzoic acid efflux pump subunit AaeA (310 aa).

Residues 12–32 (AITVVLVILAFIAIFNAWVYY) traverse the membrane as a helical segment.

This sequence belongs to the membrane fusion protein (MFP) (TC 8.A.1) family.

It is found in the cell inner membrane. Its function is as follows. Forms an efflux pump with AaeB. This chain is p-hydroxybenzoic acid efflux pump subunit AaeA, found in Escherichia coli O9:H4 (strain HS).